A 376-amino-acid polypeptide reads, in one-letter code: MRTFGEARSIDINNDLERGYEAALLIQTLELEYYGDRPIRPNLQLSVPRSLQSTILRKFHTAVNICRLTFEAIKPNISQLDSQEYRKFQLIETIVNRYAPKRSSRSTSMSRAPDPLPRSLLGLVDKVRRQLDPTSEATLVAGFRRRRDSTLISLKIILLLILVPLLVQQMSRTYLITPAIDYLAPDLPFLSYPKPQLEEQAVEKLRVFKAEIEFDALLKGDSIPSQDELQKALVIKANQLKDEADKESTHAVKNVLADIAALIAFAFVCIINREELRVLRGFLDEAVYGLSDSAKAFAIILFTDMFVGFHSPEGWQVLLQGIANHFGFPARENFILLFIATFPVILATIFKYWIFRYLNRVSPSSVATLRGMNGSS.

Transmembrane regions (helical) follow at residues 150 to 170 (TLISLKIILLLILVPLLVQQM), 251 to 271 (AVKNVLADIAALIAFAFVCII), 299 to 319 (IILFTDMFVGFHSPEGWQVLL), and 334 to 354 (FILLFIATFPVILATIFKYWI).

It belongs to the CemA family.

The protein resides in the cell inner membrane. Its function is as follows. Required for H(+) efflux immediately after light irradiation to form a rapid H(+) concentration gradient across the thylakoid membranes. Together with PxcL, contributes to transient H(+) uptake following dark to light transition. The protein is Proton extrusion protein PxcA of Prochlorococcus marinus (strain MIT 9303).